Reading from the N-terminus, the 188-residue chain is Adrenodoxin, mitochondrial (188 aa).

The N-terminal 64 residues, 1-64, are a transit peptide targeting the mitochondrion; the sequence is MAAAPGARLL…RPLSVSARAR (64 aa). Ser-67 is modified (phosphoserine). Residues 69 to 175 enclose the 2Fe-2S ferredoxin-type domain; sequence DKITVHFKNR…NMTVRVPEAV (107 aa). At Lys-70 the chain carries N6-acetyllysine; alternate. At Lys-70 the chain carries N6-succinyllysine; alternate. Cys-110, Cys-116, Cys-119, and Cys-156 together coordinate [2Fe-2S] cluster. An N6-succinyllysine modification is found at Lys-162. Phosphoserine is present on Ser-181.

The protein belongs to the adrenodoxin/putidaredoxin family. In terms of assembly, interacts with CYP11A1. Requires [2Fe-2S] cluster as cofactor.

The protein resides in the mitochondrion matrix. Its function is as follows. Essential for the synthesis of various steroid hormones, participates in the reduction of mitochondrial cytochrome P450 for steroidogenesis. Transfers electrons from adrenodoxin reductase to CYP11A1, a cytochrome P450 that catalyzes cholesterol side-chain cleavage. Does not form a ternary complex with adrenodoxin reductase and CYP11A1 but shuttles between the two enzymes to transfer electrons. This is Adrenodoxin, mitochondrial (Fdx1) from Mus musculus (Mouse).